The chain runs to 28 residues: Kappa-stichotoxin-Shd1a/kappa-stichotoxin-Shd1b (28 aa).

At Pro-6 the chain carries 4-hydroxyproline; in form SHTX-1 (Shd1a). 2 disulfide bridges follow: Cys-7–Cys-19 and Cys-10–Cys-25.

The protein belongs to the sea anemone BBH family. Post-translationally, occurs in 2 forms which differ in the post-translational modification of Pro-6. In form SHTX-1 (Shd1a) Pro-6 is a hydroxyproline while in form SHTX-2 (Shd1b) Pro-6 is unmodified.

The protein localises to the secreted. It is found in the nematocyst. Kappa-stichotoxin-Shd1a: inhibits voltage-gated potassium channels (Kv). Its function is as follows. Kappa-stichotoxin-Shd1b: inhibits voltage-gated potassium channels (Kv). This toxin inhibits the binding of 125I-alpha-dendrotoxin to synaptosomal membranes (IC(50)=270 nM). This is Kappa-stichotoxin-Shd1a/kappa-stichotoxin-Shd1b from Stichodactyla haddoni (Saddle carpet anemone).